The primary structure comprises 274 residues: DNA-directed RNA polymerase subunit Rpo3 (274 aa).

[3Fe-4S] cluster is bound by residues Cys-202, Cys-205, and Cys-208.

Belongs to the archaeal Rpo3/eukaryotic RPB3 RNA polymerase subunit family. In terms of assembly, part of the RNA polymerase complex. The cofactor is [3Fe-4S] cluster.

It is found in the cytoplasm. The enzyme catalyses RNA(n) + a ribonucleoside 5'-triphosphate = RNA(n+1) + diphosphate. Its function is as follows. DNA-dependent RNA polymerase (RNAP) catalyzes the transcription of DNA into RNA using the four ribonucleoside triphosphates as substrates. The sequence is that of DNA-directed RNA polymerase subunit Rpo3 from Methanobrevibacter smithii (strain ATCC 35061 / DSM 861 / OCM 144 / PS).